The following is a 281-amino-acid chain: Formamidopyrimidine-DNA glycosylase (281 aa).

Residue Pro2 is the Schiff-base intermediate with DNA of the active site. Glu3 serves as the catalytic Proton donor. Lys58 functions as the Proton donor; for beta-elimination activity in the catalytic mechanism. DNA is bound by residues His94, Arg113, and Arg156. An FPG-type; degenerate zinc finger spans residues 241–281; the sequence is AVYDRVGQPCPGCDCDVARTGGIERMVQSGRSTFFCGRRQR. Arg271 acts as the Proton donor; for delta-elimination activity in catalysis.

The protein belongs to the FPG family. As to quaternary structure, monomer. It depends on Zn(2+) as a cofactor.

It carries out the reaction Hydrolysis of DNA containing ring-opened 7-methylguanine residues, releasing 2,6-diamino-4-hydroxy-5-(N-methyl)formamidopyrimidine.. It catalyses the reaction 2'-deoxyribonucleotide-(2'-deoxyribose 5'-phosphate)-2'-deoxyribonucleotide-DNA = a 3'-end 2'-deoxyribonucleotide-(2,3-dehydro-2,3-deoxyribose 5'-phosphate)-DNA + a 5'-end 5'-phospho-2'-deoxyribonucleoside-DNA + H(+). Its function is as follows. Involved in base excision repair of DNA damaged by oxidation or by mutagenic agents. Acts as a DNA glycosylase that recognizes and removes damaged bases. Has a preference for oxidized purines, such as 7,8-dihydro-8-oxoguanine (8-oxoG). Has AP (apurinic/apyrimidinic) lyase activity and introduces nicks in the DNA strand. Cleaves the DNA backbone by beta-delta elimination to generate a single-strand break at the site of the removed base with both 3'- and 5'-phosphates. This is Formamidopyrimidine-DNA glycosylase from Rhodospirillum rubrum (strain ATCC 11170 / ATH 1.1.1 / DSM 467 / LMG 4362 / NCIMB 8255 / S1).